Reading from the N-terminus, the 249-residue chain is Eukaryotic translation initiation factor 6 (249 aa).

The protein belongs to the eIF-6 family. As to quaternary structure, monomer. Associates with the 60S ribosomal subunit.

Its subcellular location is the cytoplasm. The protein resides in the nucleus. It localises to the nucleolus. In terms of biological role, binds to the 60S ribosomal subunit and prevents its association with the 40S ribosomal subunit to form the 80S initiation complex in the cytoplasm. May also be involved in ribosome biogenesis. This is Eukaryotic translation initiation factor 6 from Babesia bovis.